A 232-amino-acid chain; its full sequence is MSNVDRAEIAKFEALAHRWWDRESEFKPLHEINPLRVNWIDERVSLAGKKVLDVGCGGGILSEAMALRGATVTGIDMGEAPLAVAQLHQLESGVQVEYRQITAEALAEEMPEQFDVVTCLEMLEHVPDPSSVIRACYRMVKPGGQVFFSTINRNPKAYLLAIVGAEYILKMLPRGTHDFKKFIRPSELGAWSRDAGLQVKDIIGLTYNPLTKHYKLNSDVDVNYMIQTLREE.

Residues R36, G55, D76, and L120 each coordinate S-adenosyl-L-methionine.

The protein belongs to the methyltransferase superfamily. UbiG/COQ3 family.

The enzyme catalyses a 3-demethylubiquinol + S-adenosyl-L-methionine = a ubiquinol + S-adenosyl-L-homocysteine + H(+). It carries out the reaction a 3-(all-trans-polyprenyl)benzene-1,2-diol + S-adenosyl-L-methionine = a 2-methoxy-6-(all-trans-polyprenyl)phenol + S-adenosyl-L-homocysteine + H(+). The protein operates within cofactor biosynthesis; ubiquinone biosynthesis. Its function is as follows. O-methyltransferase that catalyzes the 2 O-methylation steps in the ubiquinone biosynthetic pathway. The sequence is that of Ubiquinone biosynthesis O-methyltransferase from Pseudomonas putida (strain ATCC 700007 / DSM 6899 / JCM 31910 / BCRC 17059 / LMG 24140 / F1).